The primary structure comprises 80 residues: Acyl carrier protein (80 aa).

Residues 4–79 (EEIKDKVFDI…QAIDYIVNAK (76 aa)) form the Carrier domain. S39 carries the post-translational modification O-(pantetheine 4'-phosphoryl)serine.

Belongs to the acyl carrier protein (ACP) family. In terms of processing, 4'-phosphopantetheine is transferred from CoA to a specific serine of apo-ACP by AcpS. This modification is essential for activity because fatty acids are bound in thioester linkage to the sulfhydryl of the prosthetic group.

It localises to the cytoplasm. The protein operates within lipid metabolism; fatty acid biosynthesis. In terms of biological role, carrier of the growing fatty acid chain in fatty acid biosynthesis. This Prosthecochloris aestuarii (strain DSM 271 / SK 413) protein is Acyl carrier protein.